The chain runs to 100 residues: Large ribosomal subunit protein eL31 (100 aa).

This sequence belongs to the eukaryotic ribosomal protein eL31 family.

The chain is Large ribosomal subunit protein eL31 from Hyperthermus butylicus (strain DSM 5456 / JCM 9403 / PLM1-5).